Reading from the N-terminus, the 233-residue chain is uncharacterized protein (233 aa).

Belongs to the RHS family.

This is an uncharacterized protein from Escherichia coli (strain K12).